Consider the following 999-residue polypeptide: Caspase recruitment domain-containing protein 14 (999 aa).

Residues 15 to 107 (DEEMLWDMLE…DVYTLVTGLQ (93 aa)) form the CARD domain. A coiled-coil region spans residues 125 to 411 (TECLAGAISS…QLRRLQAEAP (287 aa)). A maintains the protein in an inactive state region spans residues 409 to 565 (EAPGGPKQEA…RRPARKILSQ (157 aa)). Ser541 is modified (phosphoserine). One can recognise a PDZ domain in the interval 572 to 655 (QGDALLEQIG…SCYLSVKINT (84 aa)). Residues 803–986 (SESCFTLAPY…LLSCVRLAIA (184 aa)) form the Guanylate kinase-like domain.

In terms of assembly, interacts (via CARD domain) with BCL10 (via CARD domain). Forms a complex with MALT1 and BCL10; resulting in the formation of a CBM (CARD14-BLC10-MALT1) complex. Interacts with TRAF2, TRAF3 and TRAF6.

Its subcellular location is the cytoplasm. Acts as a scaffolding protein that can activate the inflammatory transcription factor NF-kappa-B and p38/JNK MAP kinase signaling pathways. Forms a signaling complex with BCL10 and MALT1, and activates MALT1 proteolytic activity and inflammatory gene expression. MALT1 is indispensable for CARD14-induced activation of NF-kappa-B and p38/JNK MAP kinases. May play a role in signaling mediated by TRAF2, TRAF3 and TRAF6 and protects cells against apoptosis. In Mus musculus (Mouse), this protein is Caspase recruitment domain-containing protein 14 (Card14).